Consider the following 123-residue polypeptide: Large ribosomal subunit protein bL17 (123 aa).

The protein belongs to the bacterial ribosomal protein bL17 family. Part of the 50S ribosomal subunit. Contacts protein L32.

The chain is Large ribosomal subunit protein bL17 from Mycoplasma genitalium (strain ATCC 33530 / DSM 19775 / NCTC 10195 / G37) (Mycoplasmoides genitalium).